Reading from the N-terminus, the 102-residue chain is Large ribosomal subunit protein bL21 (102 aa).

It belongs to the bacterial ribosomal protein bL21 family. In terms of assembly, part of the 50S ribosomal subunit. Contacts protein L20.

This protein binds to 23S rRNA in the presence of protein L20. This Phytoplasma mali (strain AT) protein is Large ribosomal subunit protein bL21.